The primary structure comprises 726 residues: Catalase-peroxidase (726 aa).

The interval 1 to 33 (MSTTDDTHNTLSTGKCPFHQGGHDRSAGAGTAS) is disordered. Residues 105-226 (WHGAGTYRSI…LGATEMGLIY (122 aa)) constitute a cross-link (tryptophyl-tyrosyl-methioninium (Trp-Tyr) (with M-252)). Histidine 106 functions as the Proton acceptor in the catalytic mechanism. Positions 226–252 (YVNPEGPDHSGEPLSAAAAIRATFGNM) form a cross-link, tryptophyl-tyrosyl-methioninium (Tyr-Met) (with W-105). Histidine 267 provides a ligand contact to heme b.

It belongs to the peroxidase family. Peroxidase/catalase subfamily. Homodimer or homotetramer. Heme b is required as a cofactor. Formation of the three residue Trp-Tyr-Met cross-link is important for the catalase, but not the peroxidase activity of the enzyme.

It carries out the reaction H2O2 + AH2 = A + 2 H2O. The enzyme catalyses 2 H2O2 = O2 + 2 H2O. In terms of biological role, bifunctional enzyme with both catalase and broad-spectrum peroxidase activity. The sequence is that of Catalase-peroxidase from Salmonella typhi.